We begin with the raw amino-acid sequence, 864 residues long: Leucine--tRNA ligase (864 aa).

The 'HIGH' region motif lies at 42 to 52 (PYPSGKLHMGH). A 'KMSKS' region motif is present at residues 624–628 (KMSKS). Residue K627 participates in ATP binding.

It belongs to the class-I aminoacyl-tRNA synthetase family.

Its subcellular location is the cytoplasm. It carries out the reaction tRNA(Leu) + L-leucine + ATP = L-leucyl-tRNA(Leu) + AMP + diphosphate. This chain is Leucine--tRNA ligase, found in Burkholderia pseudomallei (strain 1710b).